We begin with the raw amino-acid sequence, 130 residues long: Small ribosomal subunit protein uS9 (130 aa).

It belongs to the universal ribosomal protein uS9 family.

The sequence is that of Small ribosomal subunit protein uS9 from Shewanella sediminis (strain HAW-EB3).